The primary structure comprises 235 residues: Replication protein (235 aa).

Tyr149 serves as a coordination point for DNA.

The protein belongs to the Gram-positive plasmids replication protein type 1 family.

Functionally, produces a single-strand nick in a specific site of the plasmid, and this nick results in single-strand replication by rolling circle mechanism. This chain is Replication protein (repB), found in Bacillus sp.